Consider the following 440-residue polypeptide: Phosphatidylglycerol--prolipoprotein diacylglyceryl transferase (440 aa).

The next 4 helical transmembrane spans lie at 21–41 (VPIRAYALFIIAGIVAALLIG), 53–73 (GVIYDIALWTVPFGLVGGRLY), 96–116 (IWDGGLGIWGAVALGAVGAWI), and 122–142 (GIPLPAFADALAPGIILAQAI). R144 lines the a 1,2-diacyl-sn-glycero-3-phospho-(1'-sn-glycerol) pocket. Transmembrane regions (helical) follow at residues 189–209 (VALVVQPTFLYELLWNLLIFV) and 256–276 (INSFTSTFVFIGAVVYLMAAP). The segment at 280 to 440 (EDPESLRGNQ…ARLRDRLSGR (161 aa)) is disordered. A compositionally biased stretch (low complexity) spans 299-330 (EPATVAATTEAATEGVAAPADGAEAAGADATA). Positions 332-346 (RPEESAEPDVEKPES) are enriched in basic and acidic residues. Positions 347–417 (EETEAEAAEE…PEQPVAEEPE (71 aa)) are enriched in acidic residues. The segment covering 424–440 (ETKRRWGARLRDRLSGR) has biased composition (basic and acidic residues).

The protein belongs to the Lgt family.

It localises to the cell membrane. The enzyme catalyses L-cysteinyl-[prolipoprotein] + a 1,2-diacyl-sn-glycero-3-phospho-(1'-sn-glycerol) = an S-1,2-diacyl-sn-glyceryl-L-cysteinyl-[prolipoprotein] + sn-glycerol 1-phosphate + H(+). The protein operates within protein modification; lipoprotein biosynthesis (diacylglyceryl transfer). Its function is as follows. Catalyzes the transfer of the diacylglyceryl group from phosphatidylglycerol to the sulfhydryl group of the N-terminal cysteine of a prolipoprotein, the first step in the formation of mature lipoproteins. The sequence is that of Phosphatidylglycerol--prolipoprotein diacylglyceryl transferase from Mycobacterium avium (strain 104).